The primary structure comprises 152 residues: D-erythrulose-4-phosphate isomerase (152 aa).

C67 serves as the catalytic Proton acceptor.

Belongs to the LacAB/RpiB family.

It catalyses the reaction D-erythrulose 4-phosphate = D-erythrose 4-phosphate. The protein operates within carbohydrate metabolism. In terms of biological role, involved in catabolism of D-apiose. Catalyzes the isomerization of D-erythrulose 4-phosphate to D-erythrose 4-phosphate. This is D-erythrulose-4-phosphate isomerase from Pectobacterium atrosepticum (strain SCRI 1043 / ATCC BAA-672) (Erwinia carotovora subsp. atroseptica).